A 579-amino-acid chain; its full sequence is DBIRD complex subunit ZNF326 (579 aa).

The segment at 1–124 (MDFEDDYTHS…YRNSLDSFGG (124 aa)) is mediates transcriptional activation. A phosphoserine mark is found at Ser48, Ser56, Ser63, Ser69, Ser81, Ser82, Ser91, Ser106, Ser114, Ser118, Ser121, and Ser137. Lys140 is covalently cross-linked (Glycyl lysine isopeptide (Lys-Gly) (interchain with G-Cter in SUMO2)). A disordered region spans residues 154 to 194 (YSSYSSFSSPHMKPAPVGSRGRGTPAYPESTFGSRNYDAFG). Arg173 is subject to Omega-N-methylarginine. Position 212 is a phosphoserine (Ser212). Arg235 is modified (omega-N-methylarginine). Residues 238 to 260 (KRKMIQPFNKPGGTFIKKPKLAK) carry the Bipartite nuclear localization signal motif. Lys240 participates in a covalent cross-link: Glycyl lysine isopeptide (Lys-Gly) (interchain with G-Cter in SUMO2). Lys247 is subject to N6-acetyllysine; alternate. Residue Lys247 forms a Glycyl lysine isopeptide (Lys-Gly) (interchain with G-Cter in SUMO2); alternate linkage. A disordered region spans residues 248-302 (PGGTFIKKPKLAKPVEKMSLSKSPTKTDPKNEEEEKRRIEARREKQRRRREKNSE). Phosphothreonine is present on Thr251. Glycyl lysine isopeptide (Lys-Gly) (interchain with G-Cter in SUMO2) cross-links involve residues Lys254 and Lys264. Position 270 is a phosphoserine (Ser270). Basic and acidic residues predominate over residues 272–290 (TKTDPKNEEEEKRRIEARR). Residues 314–336 (CSFCKFRTFEEKDIELHLESASH) form a C2H2 AKAP95-type 1 zinc finger. Residue Lys401 forms a Glycyl lysine isopeptide (Lys-Gly) (interchain with G-Cter in SUMO2) linkage. The C2H2 AKAP95-type 2 zinc finger occupies 407-430 (CSACSVYIPALHSSVQQHLKSPDH). Residues Lys459 and Lys467 each participate in a glycyl lysine isopeptide (Lys-Gly) (interchain with G-Cter in SUMO2) cross-link. The segment at 470-579 (NPFEIQDHSQ…GFSVDQAEEN (110 aa)) is disordered. 3 stretches are compositionally biased toward acidic residues: residues 483–520 (IEGD…EEVG), 529–541 (GDTE…EGEG), and 549–565 (GEGE…EEAK).

This sequence belongs to the AKAP95 family. In terms of assembly, component of the DBIRD complex. Interacts with CCAR2; the interaction is direct.

Its subcellular location is the nucleus matrix. Functionally, core component of the DBIRD complex, a multiprotein complex that acts at the interface between core mRNP particles and RNA polymerase II (RNAPII) and integrates transcript elongation with the regulation of alternative splicing: the DBIRD complex affects local transcript elongation rates and alternative splicing of a large set of exons embedded in (A + T)-rich DNA regions. May play a role in neuronal differentiation and is able to bind DNA and activate expression in vitro. The polypeptide is DBIRD complex subunit ZNF326 (ZNF326) (Bos taurus (Bovine)).